Consider the following 184-residue polypeptide: Lactoylglutathione lyase (184 aa).

Residue alanine 2 is modified to N-acetylalanine. The cysteines at positions 19 and 20 are disulfide-linked. The VOC domain maps to 31–177 (LLQQTMLRVK…DGYWIEILNP (147 aa)). Glutamine 34 and arginine 38 together coordinate substrate. Zn(2+) is bound at residue glutamine 34. The cysteines at positions 61 and 139 are disulfide-linked. N6-succinyllysine is present on lysine 88. Glutamate 100 provides a ligand contact to Zn(2+). Asparagine 104 is a binding site for substrate. Threonine 107 carries the post-translational modification Phosphothreonine. 2 residues coordinate substrate: arginine 123 and histidine 127. Zn(2+) is bound at residue histidine 127. An S-glutathionyl cysteine; alternate modification is found at cysteine 139. Lysine 148 is modified (N6-acetyllysine; alternate). An N6-succinyllysine; alternate modification is found at lysine 148. Substrate is bound at residue 157–158 (KM). Residue glutamate 173 coordinates Zn(2+). Glutamate 173 functions as the Proton donor/acceptor in the catalytic mechanism.

The protein belongs to the glyoxalase I family. As to quaternary structure, homodimer. It depends on Zn(2+) as a cofactor. Post-translationally, glutathionylation at Cys-139 inhibits enzyme activity. Phosphorylated at Thr-107 in the presence of CaMK2. However, this is a consensus site for phosphorylation by CK2 so phosphorylation may be mediated by CK2 rather than CaMK2. Phosphorylation is induced by TNF and suppresses the TNF-induced transcriptional activity of NF-kappa-B. In terms of processing, exists in a nitric oxide (NO)-modified form. The exact nature of the modification is unknown, but it suppresses the TNF-induced transcriptional activity of NF-kappa-B.

The enzyme catalyses (R)-S-lactoylglutathione = methylglyoxal + glutathione. The protein operates within secondary metabolite metabolism; methylglyoxal degradation; (R)-lactate from methylglyoxal: step 1/2. Its activity is regulated as follows. Regulated by oxidation of Cys-139 in response to the redox state of the cell. Results in the alternative formation of cystine or glutathione-bound cysteine, the latter modification leading to reduced enzyme activity. Catalyzes the conversion of hemimercaptal, formed from methylglyoxal and glutathione, to S-lactoylglutathione. Involved in the regulation of TNF-induced transcriptional activity of NF-kappa-B. Required for normal osteoclastogenesis. The protein is Lactoylglutathione lyase (GLO1) of Homo sapiens (Human).